A 233-amino-acid chain; its full sequence is Large ribosomal subunit protein uL1 (233 aa).

Belongs to the universal ribosomal protein uL1 family. In terms of assembly, part of the 50S ribosomal subunit.

Binds directly to 23S rRNA. The L1 stalk is quite mobile in the ribosome, and is involved in E site tRNA release. Functionally, protein L1 is also a translational repressor protein, it controls the translation of the L11 operon by binding to its mRNA. This Shewanella pealeana (strain ATCC 700345 / ANG-SQ1) protein is Large ribosomal subunit protein uL1.